The following is a 434-amino-acid chain: Glutamate-1-semialdehyde 2,1-aminomutase 1 (434 aa).

At lysine 270 the chain carries N6-(pyridoxal phosphate)lysine.

Belongs to the class-III pyridoxal-phosphate-dependent aminotransferase family. HemL subfamily. In terms of assembly, homodimer. The cofactor is pyridoxal 5'-phosphate.

It is found in the cytoplasm. The enzyme catalyses (S)-4-amino-5-oxopentanoate = 5-aminolevulinate. The protein operates within porphyrin-containing compound metabolism; protoporphyrin-IX biosynthesis; 5-aminolevulinate from L-glutamyl-tRNA(Glu): step 2/2. The sequence is that of Glutamate-1-semialdehyde 2,1-aminomutase 1 from Bacillus anthracis (strain A0248).